Here is a 101-residue protein sequence, read N- to C-terminus: Small ribosomal subunit protein uS14 (101 aa).

The segment at 1 to 25 (MAKVSAIQKNKSRQKKSQRLHNKRS) is disordered. The span at 10 to 25 (NKSRQKKSQRLHNKRS) shows a compositional bias: basic residues.

This sequence belongs to the universal ribosomal protein uS14 family. As to quaternary structure, part of the 30S ribosomal subunit. Contacts proteins S3 and S10.

Its function is as follows. Binds 16S rRNA, required for the assembly of 30S particles and may also be responsible for determining the conformation of the 16S rRNA at the A site. The chain is Small ribosomal subunit protein uS14 from Rickettsia typhi (strain ATCC VR-144 / Wilmington).